Consider the following 501-residue polypeptide: Inactive cytidine monophosphate-N-acetylneuraminic acid hydroxylase (501 aa).

Belongs to the CMP-Neu5Ac hydroxylase family. Widely expressed. Highly expressed in thymus. Not expressed in brain. May be expressed in adult stem cells (at protein level).

It is found in the cytoplasm. In terms of biological role, sialic acids are components of carbohydrate chains of glycoconjugates and are involved in cell-cell recognition and cell-pathogen interactions. That protein has no CMP-N-acetylneuraminate monooxygenase activity and is not able to convert CMP-N-acetylneuraminic acid (CMP-Neu5Ac) into its hydroxylated derivative CMP-N-glycolylneuraminic acid (CMP-Neu5Gc), a sialic acid abundantly expressed at the surface of many cells in vertebrates. However, it may play a role in Wnt signaling. This chain is Inactive cytidine monophosphate-N-acetylneuraminic acid hydroxylase (CMAHP), found in Homo sapiens (Human).